The following is a 674-amino-acid chain: Carbon monoxide dehydrogenase/acetyl-CoA synthase subunit beta (674 aa).

Residues 1–25 (MPRFRDLSHNCRPSEAPRVMEPKNR) form a disordered region. The [4Fe-4S] cluster site is built by Cys-59, Cys-67, Cys-68, Cys-71, Cys-76, and Cys-90. His-283, Cys-317, Cys-355, Cys-470, Cys-500, and Cys-550 together coordinate [Ni-4Fe-4S] cluster.

As to quaternary structure, tetramer of two alpha and two beta chains. Requires [Ni-Fe-S] cluster as cofactor. The cofactor is [4Fe-4S] cluster.

It catalyses the reaction CO + 2 oxidized [2Fe-2S]-[ferredoxin] + H2O = 2 reduced [2Fe-2S]-[ferredoxin] + CO2 + 2 H(+). Functionally, the beta subunit (this protein) generates CO from CO(2), while the alpha subunit combines the CO with CoA and a methyl group to form acetyl-CoA. The methyl group, which is incorporated into acetyl-CoA, is transferred to the alpha subunit by a corrinoid iron-sulfur protein. The polypeptide is Carbon monoxide dehydrogenase/acetyl-CoA synthase subunit beta (Moorella thermoacetica (Clostridium thermoaceticum)).